Here is a 453-residue protein sequence, read N- to C-terminus: Cholesterol 7-desaturase nvd (453 aa).

A helical membrane pass occupies residues 53–73 (IVEYILILTLMFAFSAILYVI). In terms of domain architecture, Rieske spans 126 to 229 (WFAVAETREL…VVETDGAIWI (104 aa)). Cys-167, His-169, Cys-187, and His-190 together coordinate [2Fe-2S] cluster.

This sequence belongs to the cholesterol 7-desaturase family. The cofactor is [2Fe-2S] cluster.

Its subcellular location is the membrane. The catalysed reaction is cholesterol + NADPH + O2 + H(+) = 7-dehydrocholesterol + NADP(+) + 2 H2O. It carries out the reaction cholesterol + NADH + O2 + H(+) = 7-dehydrocholesterol + NAD(+) + 2 H2O. It participates in steroid hormone biosynthesis; dafachronic acid biosynthesis. Catalyzes the production of 7-dehydrocholesterol (7-DHC or cholesta-5,7-dien-3beta-ol) by inserting a double bond (desaturating) at the C7-C8 single bond of cholesterol. Essential regulator of steroid biosynthesis as this reaction is the first step in the synthesis of the steroid hormone Delta(7)-dafachronic acid. The protein is Cholesterol 7-desaturase nvd of Bombyx mori (Silk moth).